The following is a 20-amino-acid chain: Unknown protein NF040 from 2D-PAGE (20 aa).

Positions 1 to 20 constitute a TCTP domain; it reads MKVYTDIFTRDEFLSDSYPM.

The protein belongs to the TCTP family.

The protein is Unknown protein NF040 from 2D-PAGE of Naegleria fowleri (Brain eating amoeba).